A 2273-amino-acid polypeptide reads, in one-letter code: Acetyl-CoA carboxylase, mitochondrial (2273 aa).

The transit peptide at 1 to 104 (KGKTITHGQS…RGNIHKHTRL (104 aa)) directs the protein to the mitochondrion. Residues 134–635 (VISKILIANN…STGWLDDLIL (502 aa)) enclose the Biotin carboxylation domain. The region spanning 292 to 484 (KTNFVSVPDD…LPATQLQIAM (193 aa)) is the ATP-grasp domain. An ATP-binding site is contributed by 332–337 (GGGGKG). Arginine 459 is a catalytic residue. The Biotinyl-binding domain occupies 763-837 (LEAELNPTQV…EAGDVIAKLT (75 aa)). Lysine 804 carries the N6-biotinyllysine modification. A CoA carboxyltransferase N-terminal domain is found at 1532–1867 (PYSVKDWLQP…KRDMSPPLLE (336 aa)). A carboxyltransferase region spans residues 1532–2187 (PYSVKDWLQP…EGQVIKRLQK (656 aa)). Residues arginine 1776, lysine 2080, and arginine 2082 each contribute to the CoA site. The region spanning 1871-2187 (RWDRDVDFKP…EGQVIKRLQK (317 aa)) is the CoA carboxyltransferase C-terminal domain.

Requires biotin as cofactor.

Its subcellular location is the mitochondrion. The catalysed reaction is hydrogencarbonate + acetyl-CoA + ATP = malonyl-CoA + ADP + phosphate + H(+). It carries out the reaction N(6)-biotinyl-L-lysyl-[protein] + hydrogencarbonate + ATP = N(6)-carboxybiotinyl-L-lysyl-[protein] + ADP + phosphate + H(+). It functions in the pathway lipid metabolism; malonyl-CoA biosynthesis; malonyl-CoA from acetyl-CoA: step 1/1. Functionally, catalyzes the rate-limiting reaction in the mitochondrial fatty acid synthesis (FAS) type II pathway. Responsible for the production of the mitochondrial malonyl-CoA, used for the biosynthesis of the cofactor lipoic acid. This protein carries three functions: biotin carboxyl carrier protein, biotin carboxylase, and carboxyltransferase. This is Acetyl-CoA carboxylase, mitochondrial (HFA1) from Saccharomyces cerevisiae (strain JAY291) (Baker's yeast).